Consider the following 370-residue polypeptide: DNA replication and repair protein RecF (370 aa).

30–37 (GENAQGKT) contributes to the ATP binding site.

This sequence belongs to the RecF family. Recruited to foci following DNA damage; probably interacts with RecO.

The protein resides in the cytoplasm. Its subcellular location is the nucleoid. In terms of biological role, the RecF protein is involved in DNA metabolism; it is required for DNA replication and normal SOS inducibility. RecF binds preferentially to single-stranded, linear DNA. It also seems to bind ATP. Is recruited to repair centers, foci that are the site of double-strand DNA break(s) after RecN and RecO; recruitment may depend on RecO. A positive modulator of RecA. The protein is DNA replication and repair protein RecF of Bacillus subtilis (strain 168).